A 538-amino-acid chain; its full sequence is Putative outer membrane porin BglH (538 aa).

A signal peptide spans 1–25 (MFRRNIITSAILLMAPLAFSAQSLA).

This sequence belongs to the porin LamB (TC 1.B.3) family.

It localises to the cell outer membrane. Its function is as follows. May be a sugar porin with a broad carbohydrate specificity. The sequence is that of Putative outer membrane porin BglH (bglH) from Escherichia coli (strain UTI89 / UPEC).